Reading from the N-terminus, the 534-residue chain is MAGLLSSCCGRVYALLPDSAHPSAQQKTPFGVNRYVLLVIYMIYALLTSSVYFGWRSMSAMLFKSGQFSWVCTGESADTSPEEGETDYLCALQDTKVQSLFTIAMACHFTCSAVAGYLLDTVGPKAVALLGQTFNALAWILLAFSGPNFRSVYPAFVFMGAGADVSVYPTLLIVNLFPGSTALIMATLGACISLSFFVPLVLRTMWESTGISFEAVCIGYAVAGPILCAVVAFFFIPFKAFKGVDNFSACVEAEKLANSPTAQSSPKAVDSPPCDEGASSRGRLAVSHNTERTAPDDEQEKDNTERISLSDLACDPRFKKQKVSFSSQAFTFLYFGICLYFTVCGWVMAYYQEAAGRFLCNDAEYTLEILTPLSTIPCLLFGVVINRIGIMPVILMLNTIGLLTYVCVVAAESVVAQYFSVIFFFMYISIFTTQMYVFVESTFDSAHFGKLIGVASLIGGLLSLISNVLYGDVTVGMLNGDTRPVVIALLAVIILMYPILLAMRTKRNRKKQMEQEDIRSRVLELKAAHAADAA.

Transmembrane regions (helical) follow at residues 35-55 (YVLL…YFGW), 99-119 (SLFT…GYLL), 126-146 (AVAL…AFSG), 154-174 (PAFV…LLIV), 182-202 (ALIM…PLVL), and 216-236 (VCIG…FFFI). Residue Asn246 is glycosylated (N-linked (GlcNAc...) asparagine). Residues 261-302 (TAQSSPKAVDSPPCDEGASSRGRLAVSHNTERTAPDDEQEKD) form a disordered region. Residues 289–302 (NTERTAPDDEQEKD) show a composition bias toward basic and acidic residues. Transmembrane regions (helical) follow at residues 329 to 349 (AFTF…WVMA), 365 to 385 (YTLE…GVVI), 388 to 408 (IGIM…YVCV), 419 to 439 (FSVI…YVFV), 451 to 471 (LIGV…VLYG), and 483 to 503 (RPVV…LLAM).

The protein belongs to the SLC43A transporter (TC 2.A.1.44) family.

The protein localises to the cell membrane. The catalysed reaction is L-arginine(in) = L-arginine(out). In terms of biological role, selective L-arginine transporter that is essential for parasite survival and virulence. Does not require other inorganic ions such as sodium, chloride, potassium or calcium. This is Arginine transporter 1 from Toxoplasma gondii (strain ATCC 50611 / Me49).